Reading from the N-terminus, the 878-residue chain is AP-2 complex subunit alpha (878 aa).

It belongs to the adaptor complexes large subunit family. In terms of assembly, adaptor protein complex 2 (AP-2) is a heterotetramer composed of two large adaptins (alpha-type subunit apl3 and beta-type subunit apl1), a medium chain (mu-type subunit apm4) and a small adaptin (sigma-type subunit aps2).

Its subcellular location is the cell membrane. The protein resides in the membrane. It is found in the coated pit. Functionally, adaptins are components of the adaptor complexes which link clathrin to receptors in coated vesicles. Clathrin-associated protein complexes are believed to interact with the cytoplasmic tails of membrane proteins, leading to their selection and concentration. Alpha adaptin is a subunit of the plasma membrane adaptor. The polypeptide is AP-2 complex subunit alpha (apl3) (Schizosaccharomyces pombe (strain 972 / ATCC 24843) (Fission yeast)).